A 1832-amino-acid polypeptide reads, in one-letter code: Zinc finger SWIM domain-containing protein 8 (1832 aa).

3 positions are modified to phosphoserine: S36, S48, and S53. The interval 45–67 (RKQSAGPNSPTGGGGGGGSGGTR) is disordered. Over residues 55-65 (TGGGGGGGSGG) the composition is skewed to gly residues. The segment at 172-208 (YNVAVMFDRCRVTSCSCTCGAGAKWCTHVVALCLFRI) adopts an SWIM-type zinc-finger fold. S437 and S564 each carry phosphoserine. Disordered regions lie at residues 516–722 (PGAS…VGEE), 800–821 (NPPD…VSTS), and 1018–1216 (SQTH…TVDV). A compositionally biased stretch (basic and acidic residues) spans 563–572 (LSAEGGDKAL). A compositionally biased stretch (polar residues) spans 1021–1042 (HKPQTLSSFYSSSRPATANQRS). Residues 1121-1132 (SRGGYNGRGWGS) are compositionally biased toward gly residues. The residue at position 1141 (T1141) is a Phosphothreonine. A compositionally biased stretch (polar residues) spans 1146–1161 (IDSSAPETTSDSSPTL). Residues S1155, S1158, and S1162 each carry the phosphoserine modification. The span at 1176-1211 (GRGQDSDSISSSSSDSLGSSSSSGSRRASASGGARA) shows a compositional bias: low complexity. A Phosphoserine modification is found at S1270. Residues 1435–1446 (STAREGATSCSG) show a composition bias toward polar residues. The tract at residues 1435 to 1465 (STAREGATSCSGSGMRAAGEAGRGLPEGRGA) is disordered. Residues 1455-1465 (AGRGLPEGRGA) show a composition bias toward gly residues. S1831 carries the post-translational modification Phosphoserine.

Belongs to the ZSWIM8 family. In terms of assembly, component of the SCF-like E3 ubiquitin-protein ligase complex which contains CUL3, RBX1, ELOB, ELOC and ZSWIM8. Interacts with DAB1.

The protein localises to the cytoplasm. Its subcellular location is the cytosol. Its pathway is protein modification; protein ubiquitination. Its function is as follows. Substrate recognition component of a SCF-like E3 ubiquitin-protein ligase complex that promotes target-directed microRNA degradation (TDMD), a process that mediates degradation of microRNAs (miRNAs). The SCF-like E3 ubiquitin-protein ligase complex acts by catalyzing ubiquitination and subsequent degradation of AGO proteins (AGO1, AGO2, AGO3 and/or AGO4), thereby exposing miRNAs for degradation. Specifically recognizes and binds AGO proteins when they are engaged with a TDMD target. May also acts as a regulator of axon guidance: specifically recognizes misfolded ROBO3 and promotes its ubiquitination and subsequent degradation. Plays an essential role for proper embryonic development of heart and lung. Controls protein quality of DAB1, a key signal molecule for brain development, thus protecting its signaling strength. Mechanistically, recognizes intrinsically disordered regions of DAB1 and eliminates misfolded DAB1 that cannot be properly phosphorylated. This chain is Zinc finger SWIM domain-containing protein 8, found in Mus musculus (Mouse).